Consider the following 239-residue polypeptide: Probable 2-phosphosulfolactate phosphatase (239 aa).

Belongs to the ComB family. Mg(2+) is required as a cofactor.

It catalyses the reaction (2R)-O-phospho-3-sulfolactate + H2O = (2R)-3-sulfolactate + phosphate. The chain is Probable 2-phosphosulfolactate phosphatase from Clostridium botulinum (strain 657 / Type Ba4).